The sequence spans 101 residues: Small ribosomal subunit protein uS17 (101 aa).

Belongs to the universal ribosomal protein uS17 family. Part of the 30S ribosomal subunit.

One of the primary rRNA binding proteins, it binds specifically to the 5'-end of 16S ribosomal RNA. This is Small ribosomal subunit protein uS17 from Kosmotoga olearia (strain ATCC BAA-1733 / DSM 21960 / TBF 19.5.1).